Consider the following 476-residue polypeptide: MSYEERANAHPNLGDESDVEEEALVNDYREQVNFDDGMSELDRTTSLGGGSQTQDLQAQLAAAATPLEYQATLETKFASYDNYCSLFHYILNSDGPVELEVPSYYWAWDVIDEFIYQFESFCRYRNRVARSGSNEEEAQLLRENPNTWGCYSVLNVLYSLIQRSQINEQLAAIKRGEDPLAFAGEYGSRPLYKMLGYFSIIGLLRVHCLLGDFSLALKTLDDIEMNKKAMFARVMAAHFTTYYYVGFSYMMMRRYADAIRMFSHILVYVSRTKNFQKGGNSYDAIAKKNDQMYALIAICVALHPTRLDDTIHSALREKYGEQLNRLQHGGPEALPLFEELFRSACPKFISPTPPDFENPALNVDPVDHHTAIFMDEVKNTLYNPTIRSYLKLYTTMDLKKLAGFLEVEPEKLRSWLLINKQRSRQVRWVEGGLLEGEPVNANDLDYALENDLIHVSETKAGRRLVDWYLRNLARVY.

A PCI domain is found at 257-452 (DAIRMFSHIL…DLDYALENDL (196 aa)).

This sequence belongs to the eIF-3 subunit L family. As to quaternary structure, component of the eukaryotic translation initiation factor 3 (eIF-3) complex.

Its subcellular location is the cytoplasm. In terms of biological role, component of the eukaryotic translation initiation factor 3 (eIF-3) complex, which is involved in protein synthesis of a specialized repertoire of mRNAs and, together with other initiation factors, stimulates binding of mRNA and methionyl-tRNAi to the 40S ribosome. The eIF-3 complex specifically targets and initiates translation of a subset of mRNAs involved in cell proliferation. The protein is Eukaryotic translation initiation factor 3 subunit L of Aspergillus niger (strain ATCC MYA-4892 / CBS 513.88 / FGSC A1513).